Consider the following 379-residue polypeptide: Cytochrome b (379 aa).

4 helical membrane passes run 33–53 (FGSL…FLAM), 77–98 (WLIR…FIHV), 113–133 (WNIG…GYVL), and 178–198 (FFAF…VHLL). Heme b is bound by residues His-83 and His-97. His-182 and His-196 together coordinate heme b. A ubiquinone is bound at residue His-201. 4 helical membrane-spanning segments follow: residues 226 to 246 (TKDL…TLFF), 288 to 308 (LGGV…PLLN), 320 to 340 (ITQT…WIGG), and 347 to 367 (FTTI…ILIP).

Belongs to the cytochrome b family. The cytochrome bc1 complex contains 11 subunits: 3 respiratory subunits (MT-CYB, CYC1 and UQCRFS1), 2 core proteins (UQCRC1 and UQCRC2) and 6 low-molecular weight proteins (UQCRH/QCR6, UQCRB/QCR7, UQCRQ/QCR8, UQCR10/QCR9, UQCR11/QCR10 and a cleavage product of UQCRFS1). This cytochrome bc1 complex then forms a dimer. Heme b is required as a cofactor.

The protein resides in the mitochondrion inner membrane. Functionally, component of the ubiquinol-cytochrome c reductase complex (complex III or cytochrome b-c1 complex) that is part of the mitochondrial respiratory chain. The b-c1 complex mediates electron transfer from ubiquinol to cytochrome c. Contributes to the generation of a proton gradient across the mitochondrial membrane that is then used for ATP synthesis. The sequence is that of Cytochrome b (MT-CYB) from Akodon azarae (Azara's grass mouse).